The chain runs to 172 residues: Adenylate kinase isoenzyme 6 (172 aa).

Positions 13, 15, 16, 17, and 18 each coordinate ATP. The NMPbind stretch occupies residues 33 to 56; that stretch reads NVGDLAREGQLYDGYDEEYGCPIL. The interval 108–118 is LID; that stretch reads TRGYNEKKLQD. Arg-109 contributes to the ATP binding site.

It belongs to the adenylate kinase family. AK6 subfamily. As to quaternary structure, monomer and homodimer. Interacts with small ribosomal subunit protein uS11. Not a structural component of 43S pre-ribosomes, but transiently interacts with them by binding to uS11. Interacts with COIL (via C-terminus).

The protein resides in the cytoplasm. The protein localises to the nucleus. It is found in the nucleoplasm. It localises to the cajal body. It catalyses the reaction AMP + ATP = 2 ADP. The enzyme catalyses ATP + H2O = ADP + phosphate + H(+). Broad-specificity nucleoside monophosphate (NMP) kinase that catalyzes the reversible transfer of the terminal phosphate group between nucleoside triphosphates and monophosphates. Also has ATPase activity. Involved in the late cytoplasmic maturation steps of the 40S ribosomal particles, specifically 18S rRNA maturation. While NMP activity is not required for ribosome maturation, ATPase activity is. Associates transiently with small ribosomal subunit protein uS11. ATP hydrolysis breaks the interaction with uS11. May temporarily remove uS11 from the ribosome to enable a conformational change of the ribosomal RNA that is needed for the final maturation step of the small ribosomal subunit. Its NMP activity may have a role in nuclear energy homeostasis. May be involved in regulation of Cajal body (CB) formation. This is Adenylate kinase isoenzyme 6 from Mus musculus (Mouse).